Consider the following 623-residue polypeptide: Chaperone protein HtpG (623 aa).

The segment at 1 to 336 is a; substrate-binding; sequence MSETNTQKAA…TEDLPLNVSR (336 aa). The segment at 337-546 is b; the sequence is EMLQATPVLA…DGGPDLTMQR (210 aa). The interval 547–623 is c; sequence LMRRSGQAMP…ATLLAGPAAE (77 aa).

Belongs to the heat shock protein 90 family. Homodimer.

The protein localises to the cytoplasm. In terms of biological role, molecular chaperone. Has ATPase activity. The sequence is that of Chaperone protein HtpG from Gluconobacter oxydans (strain 621H) (Gluconobacter suboxydans).